Consider the following 113-residue polypeptide: Cysteine proteinase inhibitor 6 (113 aa).

An N-terminal signal peptide occupies residues 1 to 18 (MAMTTRTLLLAAVCAAAA). The Secondary area of contact signature appears at 65 to 69 (QVVSG).

The protein belongs to the cystatin family. Phytocystatin subfamily.

The protein resides in the secreted. Its function is as follows. Specific inhibitor of cysteine proteinases. Probably involved in the regulation of endogenous processes and in defense against pests and pathogens. In Oryza sativa subsp. japonica (Rice), this protein is Cysteine proteinase inhibitor 6.